An 848-amino-acid chain; its full sequence is Beta-galactosidase 13 (848 aa).

The signal sequence occupies residues 1-27; that stretch reads MKIHSSDHSWLLLAVLVILLSFSGALS. N-linked (GlcNAc...) asparagine glycosylation is present at N107. E200 (proton donor) is an active-site residue. Catalysis depends on E271, which acts as the Nucleophile. N-linked (GlcNAc...) asparagine glycosylation is found at N272, N303, N376, N398, N782, N787, and N817. The SUEL-type lectin domain occupies 754 to 843; it reads DDVHLTANLK…KKLAVQVKCG (90 aa).

The protein belongs to the glycosyl hydrolase 35 family. Ubiquitous, with higher expression levels in roots, flowers and siliques.

Its subcellular location is the secreted. It is found in the extracellular space. The protein localises to the apoplast. The enzyme catalyses Hydrolysis of terminal non-reducing beta-D-galactose residues in beta-D-galactosides.. This Arabidopsis thaliana (Mouse-ear cress) protein is Beta-galactosidase 13 (BGAL13).